Consider the following 89-residue polypeptide: Small ribosomal subunit protein uS15 (89 aa).

The protein belongs to the universal ribosomal protein uS15 family. In terms of assembly, part of the 30S ribosomal subunit. Forms a bridge to the 50S subunit in the 70S ribosome, contacting the 23S rRNA.

Its function is as follows. One of the primary rRNA binding proteins, it binds directly to 16S rRNA where it helps nucleate assembly of the platform of the 30S subunit by binding and bridging several RNA helices of the 16S rRNA. In terms of biological role, forms an intersubunit bridge (bridge B4) with the 23S rRNA of the 50S subunit in the ribosome. The chain is Small ribosomal subunit protein uS15 from Protochlamydia amoebophila (strain UWE25).